A 180-amino-acid polypeptide reads, in one-letter code: KxDL motif-containing protein 1 (180 aa).

Polar residues-rich tracts occupy residues 126 to 144 (TTIATSEQSTESCDTSPSI) and 158 to 170 (QAPSDTPSVNGQI). The interval 126-180 (TTIATSEQSTESCDTSPSIISPAMSQDFEDLSQAPSDTPSVNGQILTDEEVVHED) is disordered.

It belongs to the KXD1 family. In terms of assembly, associates with the BLOC-1 complex.

Its subcellular location is the lysosome membrane. As part of a BORC-like complex may play a role in lysosomes movement and localization at the cell periphery. Associated with the cytosolic face of lysosomes, this complex may couple lysosomes to microtubule plus-end-directed kinesin motor. May also be involved in the biogenesis of lysosome-related organelles such as melanosomes. This chain is KxDL motif-containing protein 1 (kxd1), found in Xenopus tropicalis (Western clawed frog).